The primary structure comprises 171 residues: Lipoprotein signal peptidase (171 aa).

Helical transmembrane passes span Trp-15–Asp-35, Val-47–Ser-67, Trp-72–Met-92, and Ala-107–Val-127. Residues Asp-128 and Asp-146 contribute to the active site. Residues Ala-141–Phe-161 form a helical membrane-spanning segment.

Belongs to the peptidase A8 family.

It is found in the cell inner membrane. It catalyses the reaction Release of signal peptides from bacterial membrane prolipoproteins. Hydrolyzes -Xaa-Yaa-Zaa-|-(S,diacylglyceryl)Cys-, in which Xaa is hydrophobic (preferably Leu), and Yaa (Ala or Ser) and Zaa (Gly or Ala) have small, neutral side chains.. The protein operates within protein modification; lipoprotein biosynthesis (signal peptide cleavage). In terms of biological role, this protein specifically catalyzes the removal of signal peptides from prolipoproteins. This is Lipoprotein signal peptidase from Vibrio cholerae serotype O1 (strain ATCC 39315 / El Tor Inaba N16961).